The following is a 371-amino-acid chain: MPTQMEVEYWRRRYQRMNYERFAAANVIALITHAATQPLDMVRIRSQMLQEGKTFSGLGYQKGWYPFQIMEEIYAAGGGLRKFYSAFDTFFFRTVCYTTARVTAFGYFYDKVNKDPRRVARPDFLVAAGVLGGFIAGVVTNPIDIVYNRMQVDELYPQAARRNYSNTIQGLAKVAEEGALFRGAGANGFKLAAICSSMTNIYDWCKENSYFFFGPHWINRLWGTAVAVAIGTVVSMPFDMIRTRLHTMRPLPNGQMPYNGMIDCFNKIIKYECNSKWMSNFGSFYAGGEAYFLRLFLICYLSQFLVDYYNENYYDQEFWQPQRFHYQSGIDYDIHDPYTDAFNKKLVATYTTATGGMGAAHPSGKENLAII.

Solcar repeat units lie at residues 16-111, 120-208, and 215-304; these read RMNY…FYDK, ARPD…CKEN, and PHWI…LSQF. The next 6 helical transmembrane spans lie at 22 to 42, 89 to 109, 126 to 146, 184 to 204, 221 to 241, and 281 to 301; these read FAAA…LDMV, TFFF…GYFY, VAAG…IDIV, AGAN…IYDW, LWGT…FDMI, and FGSF…ICYL.

Belongs to the mitochondrial carrier (TC 2.A.29) family.

The protein localises to the membrane. This Oxytricha fallax protein is Macronuclear solute carrier homolog CR-MSC.